The sequence spans 427 residues: Inward rectifier potassium channel 2 (427 aa).

The Cytoplasmic portion of the chain corresponds to 1–81; that stretch reads MGSVRTNRYS…IFTTCVDIRW (81 aa). The residue at position 76 (Cys76) is an S-nitrosocysteine. A helical transmembrane segment spans residues 82-106; the sequence is RWMLVIFCLAFVLSWLFFGCVFWLI. The Extracellular portion of the chain corresponds to 107-128; sequence ALLHGDLDASRESKACVSEVNS. The helical; Pore-forming intramembrane region spans 129-140; it reads FTAAFLFSIETQ. The segment at residues 141–147 is an intramembrane region (pore-forming); sequence TTIGYGF. Positions 142–147 match the Selectivity filter motif; sequence TIGYGF. The Extracellular segment spans residues 148 to 156; it reads RCVTDECPV. A helical transmembrane segment spans residues 157 to 178; sequence AVFMVVFQSIVGCIIDAFIIGA. At 179–427 the chain is on the cytoplasmic side; that stretch reads VMAKMAKPKK…PRPLRRESEI (249 aa). Positions 181 to 208 are polyphosphoinositide (PIP2)-binding; sequence AKMAKPKKRNETLVFSHNAVIAMRDGKL. The tract at residues 384–427 is disordered; sequence SKEEDDSENGVPESTSTDTPPDIDLHNQASVPLEPRPLRRESEI. The PDZ-binding motif lies at 425–427; the sequence is SEI.

It belongs to the inward rectifier-type potassium channel (TC 1.A.2.1) family. KCNJ2 subfamily. As to quaternary structure, homotetramer. Homomultimeric and heteromultimeric association with KCNJ4/Kir2.3. Can form heteromeric channels with Kir2.6/KCNJ18. Associates, via its PDZ-recognition domain, with a complex containing LIN7A, LIN7B, LIN7C, DLG1, CASK and APBA1. S-nitrosylation increases the open probability and inward rectifying currents. Highly expressed in the ventricle and skeletal muscle, moderately in cerebrum and cerebellum. Only low levels are detected in kidney or lung.

The protein resides in the cell membrane. It is found in the sarcolemma. It localises to the T-tubule. It catalyses the reaction K(+)(in) = K(+)(out). Its activity is regulated as follows. Activated by phosphatidylinositol 4,5 biphosphate (PtdIns(4,5)P2). Its function is as follows. Inward rectifier potassium channels are characterized by a greater tendency to allow potassium to flow into the cell rather than out of it. Their voltage dependence is regulated by the concentration of extracellular potassium; as external potassium is raised, the voltage range of the channel opening shifts to more positive voltages. The inward rectification is mainly due to the blockage of outward current by internal magnesium. Can be blocked by extracellular barium and cesium. Probably participates in establishing action potential waveform and excitability of neuronal and muscle tissues. The sequence is that of Inward rectifier potassium channel 2 (KCNJ2) from Oryctolagus cuniculus (Rabbit).